The chain runs to 494 residues: UPF0371 protein spr0309 (494 aa).

It belongs to the UPF0371 family.

This chain is UPF0371 protein spr0309, found in Streptococcus pneumoniae (strain ATCC BAA-255 / R6).